The chain runs to 177 residues: Inorganic pyrophosphatase (177 aa).

Substrate contacts are provided by lysine 30, arginine 44, and tyrosine 56. Residues aspartate 66, aspartate 71, and aspartate 103 each contribute to the Mg(2+) site. Tyrosine 142 provides a ligand contact to substrate.

Belongs to the PPase family. Homohexamer. Requires Mg(2+) as cofactor.

It localises to the cytoplasm. The enzyme catalyses diphosphate + H2O = 2 phosphate + H(+). Catalyzes the hydrolysis of inorganic pyrophosphate (PPi) forming two phosphate ions. The sequence is that of Inorganic pyrophosphatase from Agrobacterium fabrum (strain C58 / ATCC 33970) (Agrobacterium tumefaciens (strain C58)).